Reading from the N-terminus, the 646-residue chain is Heat shock 70 kDa protein (646 aa).

Over residues 613–632 the composition is skewed to gly residues; the sequence is GGAPGGMPGAAPGGFPGGAP. Residues 613-646 form a disordered region; the sequence is GGAPGGMPGAAPGGFPGGAPGSNDNEGPTVEEVD.

It belongs to the heat shock protein 70 family.

This is Heat shock 70 kDa protein (hsps-1) from Neurospora crassa (strain ATCC 24698 / 74-OR23-1A / CBS 708.71 / DSM 1257 / FGSC 987).